A 376-amino-acid polypeptide reads, in one-letter code: MSSGAGWQSQASAKPVFTEAQASALVESVFGFKVSKIQPLPSYEDQNFRVHIARGKETTDDPVEYVLKISNTESSQTPELIEMQNHVIMFLRAAGFPTASVCRTKGDNTISLISIDSGSGVKSYLVRMLTYLPGRPIAEVAISHQQLYEIGRLAAQLDKALEEFHHPKLSLFHRENFIWNLKNVPLLEKYMGALSQSRNREIVEQVIRMFKEEVMTKLSHFRECINHGDLNDHNILVDLSKSASGEGVHQVSGILDFGDMSYGYYVFEVAIVIMYMMIESTNPIQVGGHILAGFESVIPLTAVERQALFLLVCSRFSQSLVMAAYSCQLYPENKEYLMITAKTGWKHLQQLFDMGQKAVEEIWFETAKSYESEISM.

D229 (proton acceptor) is an active-site residue.

This sequence belongs to the aminoglycoside phosphotransferase family.

Its subcellular location is the cytoplasm. It carries out the reaction (5R)-5-hydroxy-L-lysine + GTP = (5R)-5-phosphooxy-L-lysine + GDP + H(+). In terms of biological role, catalyzes the GTP-dependent phosphorylation of 5-hydroxy-L-lysine. The chain is Hydroxylysine kinase (Hykk) from Mus musculus (Mouse).